We begin with the raw amino-acid sequence, 127 residues long: S-adenosylmethionine decarboxylase proenzyme 2 (127 aa).

The Schiff-base intermediate with substrate; via pyruvic acid role is filled by S63. S63 carries the post-translational modification Pyruvic acid (Ser); by autocatalysis. The active-site Proton acceptor; for processing activity is H68. The Proton donor; for catalytic activity role is filled by C83.

It belongs to the prokaryotic AdoMetDC family. Type 1 subfamily. Heterotetramer of two alpha and two beta chains arranged as a dimer of alpha/beta heterodimers. Pyruvate serves as cofactor. Is synthesized initially as an inactive proenzyme. Formation of the active enzyme involves a self-maturation process in which the active site pyruvoyl group is generated from an internal serine residue via an autocatalytic post-translational modification. Two non-identical subunits are generated from the proenzyme in this reaction, and the pyruvate is formed at the N-terminus of the alpha chain, which is derived from the carboxyl end of the proenzyme. The post-translation cleavage follows an unusual pathway, termed non-hydrolytic serinolysis, in which the side chain hydroxyl group of the serine supplies its oxygen atom to form the C-terminus of the beta chain, while the remainder of the serine residue undergoes an oxidative deamination to produce ammonia and the pyruvoyl group blocking the N-terminus of the alpha chain.

The enzyme catalyses S-adenosyl-L-methionine + H(+) = S-adenosyl 3-(methylsulfanyl)propylamine + CO2. The protein operates within amine and polyamine biosynthesis; S-adenosylmethioninamine biosynthesis; S-adenosylmethioninamine from S-adenosyl-L-methionine: step 1/1. Its function is as follows. Catalyzes the decarboxylation of S-adenosylmethionine to S-adenosylmethioninamine (dcAdoMet), the propylamine donor required for the synthesis of the polyamines spermine and spermidine from the diamine putrescine. The polypeptide is S-adenosylmethionine decarboxylase proenzyme 2 (Halalkalibacterium halodurans (strain ATCC BAA-125 / DSM 18197 / FERM 7344 / JCM 9153 / C-125) (Bacillus halodurans)).